The following is a 685-amino-acid chain: Methionine--tRNA ligase (685 aa).

Positions 12-22 match the 'HIGH' region motif; it reads PYANGSIHLGH. The Zn(2+) site is built by Cys-143, Cys-146, Cys-156, and Cys-159. Residues 339 to 343 carry the 'KMSKS' region motif; sequence KMSKS. Lys-342 is a binding site for ATP. The 104-residue stretch at 582–685 folds into the tRNA-binding domain; that stretch reads DFMKIDMRVA…AGAQPGDKVG (104 aa).

This sequence belongs to the class-I aminoacyl-tRNA synthetase family. MetG type 1 subfamily. Homodimer. The cofactor is Zn(2+).

Its subcellular location is the cytoplasm. The enzyme catalyses tRNA(Met) + L-methionine + ATP = L-methionyl-tRNA(Met) + AMP + diphosphate. Is required not only for elongation of protein synthesis but also for the initiation of all mRNA translation through initiator tRNA(fMet) aminoacylation. The protein is Methionine--tRNA ligase of Neisseria meningitidis serogroup A / serotype 4A (strain DSM 15465 / Z2491).